Consider the following 241-residue polypeptide: UDP-2,3-diacylglucosamine hydrolase (241 aa).

Mn(2+) is bound by residues aspartate 8, histidine 10, aspartate 41, asparagine 79, and histidine 114. A substrate-binding site is contributed by 79 to 80; that stretch reads NR. Residues aspartate 122, serine 160, lysine 167, and histidine 195 each contribute to the substrate site. Mn(2+)-binding residues include histidine 195 and histidine 197.

The protein belongs to the LpxH family. It depends on Mn(2+) as a cofactor.

It is found in the cell inner membrane. It catalyses the reaction UDP-2-N,3-O-bis[(3R)-3-hydroxytetradecanoyl]-alpha-D-glucosamine + H2O = 2-N,3-O-bis[(3R)-3-hydroxytetradecanoyl]-alpha-D-glucosaminyl 1-phosphate + UMP + 2 H(+). It participates in glycolipid biosynthesis; lipid IV(A) biosynthesis; lipid IV(A) from (3R)-3-hydroxytetradecanoyl-[acyl-carrier-protein] and UDP-N-acetyl-alpha-D-glucosamine: step 4/6. Functionally, hydrolyzes the pyrophosphate bond of UDP-2,3-diacylglucosamine to yield 2,3-diacylglucosamine 1-phosphate (lipid X) and UMP by catalyzing the attack of water at the alpha-P atom. Involved in the biosynthesis of lipid A, a phosphorylated glycolipid that anchors the lipopolysaccharide to the outer membrane of the cell. This Azotobacter vinelandii (strain DJ / ATCC BAA-1303) protein is UDP-2,3-diacylglucosamine hydrolase.